The following is a 227-amino-acid chain: Protein FdhD (227 aa).

Position 210–215 (210–215 (FARNGK)) interacts with Mo-bis(molybdopterin guanine dinucleotide).

The protein belongs to the FdhD family.

Its subcellular location is the cytoplasm. Required for formate dehydrogenase (FDH) activity. This chain is Protein FdhD, found in Methanocaldococcus jannaschii (strain ATCC 43067 / DSM 2661 / JAL-1 / JCM 10045 / NBRC 100440) (Methanococcus jannaschii).